A 623-amino-acid chain; its full sequence is V-type proton ATPase catalytic subunit A (623 aa).

Residue 252–259 (GAFGCGKT) coordinates ATP.

The protein belongs to the ATPase alpha/beta chains family. V-ATPase is a heteromultimeric enzyme composed of a peripheral catalytic V1 complex (components A to H) attached to an integral membrane V0 proton pore complex (components: a, c, c'', d and e). Binds to the deubiquitinating enzyme AMSH3.

The protein resides in the vacuole membrane. The enzyme catalyses ATP + H2O + 4 H(+)(in) = ADP + phosphate + 5 H(+)(out). Its function is as follows. Catalytic subunit of the peripheral V1 complex of vacuolar ATPase. V-ATPase vacuolar ATPase is responsible for acidifying a variety of intracellular compartments in eukaryotic cells. The protein is V-type proton ATPase catalytic subunit A (VHA-A) of Arabidopsis thaliana (Mouse-ear cress).